The sequence spans 344 residues: Biotin synthase (344 aa).

The Radical SAM core domain occupies 40–267; it reads AEVQVSTLLS…KSMVRLSAGR (228 aa). Residues Cys55, Cys59, and Cys62 each coordinate [4Fe-4S] cluster. [2Fe-2S] cluster contacts are provided by Cys99, Cys130, Cys190, and Arg262.

Belongs to the radical SAM superfamily. Biotin synthase family. Homodimer. [4Fe-4S] cluster serves as cofactor. Requires [2Fe-2S] cluster as cofactor.

The enzyme catalyses (4R,5S)-dethiobiotin + (sulfur carrier)-SH + 2 reduced [2Fe-2S]-[ferredoxin] + 2 S-adenosyl-L-methionine = (sulfur carrier)-H + biotin + 2 5'-deoxyadenosine + 2 L-methionine + 2 oxidized [2Fe-2S]-[ferredoxin]. It functions in the pathway cofactor biosynthesis; biotin biosynthesis; biotin from 7,8-diaminononanoate: step 2/2. Catalyzes the conversion of dethiobiotin (DTB) to biotin by the insertion of a sulfur atom into dethiobiotin via a radical-based mechanism. The sequence is that of Biotin synthase from Xanthomonas campestris pv. campestris (strain 8004).